A 444-amino-acid chain; its full sequence is Trigger factor (444 aa).

A PPIase FKBP-type domain is found at 160–245 (DMQVTFDFEG…VKQVEKPKLP (86 aa)).

The protein belongs to the FKBP-type PPIase family. Tig subfamily.

It localises to the cytoplasm. It catalyses the reaction [protein]-peptidylproline (omega=180) = [protein]-peptidylproline (omega=0). Involved in protein export. Acts as a chaperone by maintaining the newly synthesized protein in an open conformation. Functions as a peptidyl-prolyl cis-trans isomerase. The chain is Trigger factor from Acinetobacter baylyi (strain ATCC 33305 / BD413 / ADP1).